A 362-amino-acid chain; its full sequence is 3-isopropylmalate dehydrogenase (362 aa).

An NAD(+)-binding site is contributed by 77–88 (GPKWGTGAVRPE). The substrate site is built by Arg-95, Arg-105, Arg-134, and Asp-223. The Mg(2+) site is built by Asp-223, Asp-248, and Asp-252. 287-298 (GSAPDLPKGKVN) is an NAD(+) binding site.

It belongs to the isocitrate and isopropylmalate dehydrogenases family. In terms of assembly, homodimer. Requires Mg(2+) as cofactor. Mn(2+) is required as a cofactor.

Its subcellular location is the cytoplasm. It catalyses the reaction (2R,3S)-3-isopropylmalate + NAD(+) = 4-methyl-2-oxopentanoate + CO2 + NADH. It participates in amino-acid biosynthesis; L-leucine biosynthesis; L-leucine from 3-methyl-2-oxobutanoate: step 3/4. Functionally, catalyzes the oxidation of 3-carboxy-2-hydroxy-4-methylpentanoate (3-isopropylmalate) to 3-carboxy-4-methyl-2-oxopentanoate. The product decarboxylates to 4-methyl-2 oxopentanoate. The polypeptide is 3-isopropylmalate dehydrogenase (LEU2) (Zygosaccharomyces bailii).